Here is a 579-residue protein sequence, read N- to C-terminus: MASFKLPELQPDNDLWGPASGSNALPAELKDIPFAPYAKNDKVGRIADWNNASGASNDAANARGGRQGRARDVQQNFGTSAASSAFAYFHGDDEASFSVVDNTRTVASRRGGLGQMSQRGGRGGRGGAGGAGAAGGRGASKFGAGAGRGARGGRGGAAGARRGGGRFGWKEWDKPQRIREASVTVGQDWEQVEEIDFVRLGKLRLEVEEPQDISSYGSLFEYDRSYDRVTVKTAQSLSSIDRIRYNTTTSEDPVIHDISAKEDAQIYMTDSILALLMCATRSVYSWDVIITKTADGKVFFDKRDGGAFDYLTVNENAADPPSEASEGKENEAAAKANAINTPSALSLEATYINQNFAFQVVNEKNVYKLEHENPFYSSDETAPLASCAYRYRKFNLSSEESDPVELVVRTEVDAYTVGASKEKQLITIKSLNEFDARAQGAGGALDWRLKLDSQRGAVVATEMKNNSFKLARFAVQSLLAGADSMKLGYISRANPKDTSRHMILGTSWLKPRELAAQMAVNLSNGWGIVRTVADLARKAEQGKYVLLKDPNKQTIRMYRVPANFGEENDEIVEEDEADE.

Disordered stretches follow at residues 1 to 20 (MASF…GPAS), 51 to 72 (NASG…RARD), and 109 to 170 (RRGG…FGWK). Over residues 51–64 (NASGASNDAANARG) the composition is skewed to low complexity. Residues 120–167 (GGRGGRGGAGGAGAAGGRGASKFGAGAGRGARGGRGGAAGARRGGGRF) show a composition bias toward gly residues. An RNA gate region spans residues 307-321 (AFDYLTVNENAADPP).

Belongs to the eIF-3 subunit D family. As to quaternary structure, component of the eukaryotic translation initiation factor 3 (eIF-3) complex.

It is found in the cytoplasm. Its function is as follows. mRNA cap-binding component of the eukaryotic translation initiation factor 3 (eIF-3) complex, which is involved in protein synthesis of a specialized repertoire of mRNAs and, together with other initiation factors, stimulates binding of mRNA and methionyl-tRNAi to the 40S ribosome. The eIF-3 complex specifically targets and initiates translation of a subset of mRNAs involved in cell proliferation. In the eIF-3 complex, eif3d specifically recognizes and binds the 7-methylguanosine cap of a subset of mRNAs. The protein is Eukaryotic translation initiation factor 3 subunit D of Mycosarcoma maydis (Corn smut fungus).